We begin with the raw amino-acid sequence, 933 residues long: Protein inturned (933 aa).

The disordered stretch occupies residues Met1–Glu54. The span at Gly37–Ser48 shows a compositional bias: polar residues. The PDZ domain occupies Leu186 to Asn264. Ser675 bears the Phosphoserine mark. Positions Leu703 to Glu742 are disordered. The span at Pro710 to Gly719 shows a compositional bias: low complexity. The segment covering Pro729–His738 has biased composition (polar residues).

It belongs to the inturned family. In terms of assembly, component of the CPLANE (ciliogenesis and planar polarity effectors) complex, composed of INTU, FUZ and WDPCP. Interacts with CPLANE1. Interacts with NPHP4 and DAAM1; INTU is mediating the interaction between NPHP4 and DAAM1.

It is found in the cytoplasm. Its subcellular location is the cell surface. The protein resides in the cytoskeleton. It localises to the cilium basal body. The protein localises to the microtubule organizing center. It is found in the centrosome. Its subcellular location is the centriole. In terms of biological role, plays a key role in ciliogenesis and embryonic development. Regulator of cilia formation by controlling the organization of the apical actin cytoskeleton and the positioning of the basal bodies at the apical cell surface, which in turn is essential for the normal orientation of elongating ciliary microtubules. Plays a key role in definition of cell polarity via its role in ciliogenesis but not via conversion extension. Has an indirect effect on hedgehog signaling. Proposed to function as core component of the CPLANE (ciliogenesis and planar polarity effectors) complex involved in the recruitment of peripheral IFT-A proteins to basal bodies. Required for recruitment of CPLANE2 to the mother centriole. Binds phosphatidylinositol 3-phosphate with highest affinity, followed by phosphatidylinositol 4-phosphate and phosphatidylinositol 5-phosphate. This is Protein inturned (INTU) from Bos taurus (Bovine).